Consider the following 170-residue polypeptide: Ribosome maturation factor RimM (170 aa).

The 73-residue stretch at 98–170 (EGQYYWADLE…RIELDWDPDF (73 aa)) folds into the PRC barrel domain.

It belongs to the RimM family. As to quaternary structure, binds ribosomal protein uS19.

The protein resides in the cytoplasm. Functionally, an accessory protein needed during the final step in the assembly of 30S ribosomal subunit, possibly for assembly of the head region. Essential for efficient processing of 16S rRNA. May be needed both before and after RbfA during the maturation of 16S rRNA. It has affinity for free ribosomal 30S subunits but not for 70S ribosomes. This chain is Ribosome maturation factor RimM, found in Alkalilimnicola ehrlichii (strain ATCC BAA-1101 / DSM 17681 / MLHE-1).